The sequence spans 689 residues: Glycine--tRNA ligase beta subunit (689 aa).

Belongs to the class-II aminoacyl-tRNA synthetase family. Tetramer of two alpha and two beta subunits.

The protein localises to the cytoplasm. It carries out the reaction tRNA(Gly) + glycine + ATP = glycyl-tRNA(Gly) + AMP + diphosphate. This Acinetobacter baumannii (strain ATCC 17978 / DSM 105126 / CIP 53.77 / LMG 1025 / NCDC KC755 / 5377) protein is Glycine--tRNA ligase beta subunit.